We begin with the raw amino-acid sequence, 137 residues long: Histone H2B (137 aa).

A compositionally biased stretch (basic and acidic residues) spans 1–10 (MPPKPADKKP). Residues 1–45 (MPPKPADKKPASKAPATASKAPEKKDAGKKTAASGDKKKRTKARK) form a disordered region. N6-acetyllysine; alternate occurs at positions 8 and 9. Glycyl lysine isopeptide (Lys-Gly) (interchain with G-Cter in SUMO); alternate cross-links involve residues Lys8 and Lys9. Residue Ser12 is modified to Phosphoserine. Lys13 is subject to N6-acetyllysine. Residue Lys24 is modified to N6-acetyllysine; alternate. Lys24 participates in a covalent cross-link: Glycyl lysine isopeptide (Lys-Gly) (interchain with G-Cter in SUMO); alternate. A Glycyl lysine isopeptide (Lys-Gly) (interchain with G-Cter in SUMO) cross-link involves residue Lys25. Lys131 participates in a covalent cross-link: Glycyl lysine isopeptide (Lys-Gly) (interchain with G-Cter in ubiquitin).

Belongs to the histone H2B family. The nucleosome is a histone octamer containing two molecules each of H2A, H2B, H3 and H4 assembled in one H3-H4 heterotetramer and two H2A-H2B heterodimers. The octamer wraps approximately 147 bp of DNA. Monoubiquitinated by the ubc-2-bre-1 complex to form H2BK123ub1. H2BK123ub1 gives a specific tag for epigenetic transcriptional activation and is also prerequisite for H3K4me and H3K79me formation. H2BK123ub1 also modulates the formation of double-strand breaks during meiosis and is a prerequisite for DNA-damage checkpoint activation. Post-translationally, phosphorylated by ste-20 to form H2BS10ph during progression through meiotic prophase. May be correlated with chromosome condensation. In terms of processing, acetylated by gcn-5 to form H2BK11ac and H2BK16ac. H2BK16ac can also be formed by esa-1. Acetylation of N-terminal lysines and particularly formation of H2BK11acK16ac has a positive effect on transcription. Sumoylation to form H2BK6su or H2BK7su, and probably also H2BK16su or H2BK17su, occurs preferentially near the telomeres and represses gene transcription.

It localises to the nucleus. The protein resides in the chromosome. In terms of biological role, core component of nucleosome. Nucleosomes wrap and compact DNA into chromatin, limiting DNA accessibility to the cellular machineries which require DNA as a template. Histones thereby play a central role in transcription regulation, DNA repair, DNA replication and chromosomal stability. DNA accessibility is regulated via a complex set of post-translational modifications of histones, also called histone code, and nucleosome remodeling. The protein is Histone H2B (hh2b) of Neurospora crassa (strain ATCC 24698 / 74-OR23-1A / CBS 708.71 / DSM 1257 / FGSC 987).